The sequence spans 152 residues: CASP-like protein 5C3 (152 aa).

Over 1-17 (MVEVPGSVGTTASLSLR) the chain is Cytoplasmic. The helical transmembrane segment at 18–38 (LGQMVLAFGSLLFMTIGVRFY) threads the bilayer. At 39–42 (QFTA) the chain is on the extracellular side. A helical transmembrane segment spans residues 43 to 63 (FCYLVTIMSLAIPWNLTLAMV). The Cytoplasmic portion of the chain corresponds to 64-78 (DIYCVILQQPFQKPR). A helical membrane pass occupies residues 79–99 (ILLAISIGDWVVSVLALASAS). Residues 100–128 (SAASVVDILRSNESSCPPTICNRYQFAAT) lie on the Extracellular side of the membrane. Asparagine 111 carries N-linked (GlcNAc...) asparagine glycosylation. A helical membrane pass occupies residues 129-149 (LAFLTWFLSLSSSLFNLWLLP). The Cytoplasmic segment spans residues 150–152 (SLI).

It belongs to the Casparian strip membrane proteins (CASP) family. In terms of assembly, homodimer and heterodimers. As to expression, expressed in the floral organ abscission zone and flower buds.

Its subcellular location is the cell membrane. The sequence is that of CASP-like protein 5C3 from Arabidopsis thaliana (Mouse-ear cress).